The following is an 873-amino-acid chain: DNA helicase/primase complex-associated protein (873 aa).

Residues 394-422 (PPLPRDDGDGENNVVEVSSSTGGAHPPSD) form a disordered region.

Belongs to the herpesviridae HEPA family. As to quaternary structure, associates with the primase and the helicase to form the helicase-primase complex. Interacts with the origin-binding protein. Interacts with the polymerase catalytic subunit.

It localises to the host nucleus. In terms of biological role, component of the helicase/primase complex. Unwinds the DNA at the replication forks and generates single-stranded DNA for both leading and lagging strand synthesis. The primase synthesizes short RNA primers on the lagging strand that the polymerase presumably elongates using dNTPs. The primase-associated factor has no known catalytic activity in the complex and may serve to facilitate the formation of the replisome by directly interacting with the origin-binding protein and the polymerase. This chain is DNA helicase/primase complex-associated protein (UL102), found in Homo sapiens (Human).